Here is a 512-residue protein sequence, read N- to C-terminus: PTS system mannitol-specific EIICB component (512 aa).

Residues 1 to 28 lie on the Cytoplasmic side of the membrane; sequence MSQTEEKKGIGRRVQAFGSFLSSMIMPN. The PTS EIIC type-2 domain occupies 17–349; that stretch reads FGSFLSSMIM…MKFTREPKQD (333 aa). Residues 29-50 traverse the membrane as a helical segment; that stretch reads IGAFIAWGFIAAIFIDNGWLPN. The Extracellular portion of the chain corresponds to 51 to 54; the sequence is KDLA. A helical membrane pass occupies residues 55–75; that stretch reads TLAGPMITYLIPLLIAFSGGR. The Cytoplasmic segment spans residues 76–139; it reads LIYDLRGGII…QGFEMLFNNF (64 aa). The chain crosses the membrane as a helical span at residues 140-161; the sequence is SAGILGFIMTIAGFKILAPLMK. Over 162–170 the chain is Extracellular; the sequence is FIMHILSVA. A helical membrane pass occupies residues 171–191; it reads VEALVHAHLLPLVSILVEPAK. Topologically, residues 192–278 are cytoplasmic; sequence IVFLNNAINH…VLMRPLLFIA (87 aa). A helical membrane pass occupies residues 279-298; it reads VILGGMTGVATYQATGFGFK. Topologically, residues 299-318 are extracellular; sequence SPASPGSFIVYCLNAPRGEF. A helical membrane pass occupies residues 319–340; that stretch reads LHMLLGVFLAALVSFVVAALIM. Residues 341–512 lie on the Cytoplasmic side of the membrane; that stretch reads KFTREPKQDL…LNNLKKDDQA (172 aa). The segment at 355–402 is disordered; that stretch reads AQMENTKGKKSSVASKLVSSDKNVNTEENASGNVSETSSSDDDPEALL. Residues 365-376 are compositionally biased toward low complexity; that stretch reads SSVASKLVSSDK. The span at 380–392 shows a compositional bias: polar residues; that stretch reads TEENASGNVSETS. Positions 419-512 constitute a PTS EIIB type-2 domain; the sequence is NHVIFACDAG…LNNLKKDDQA (94 aa). C425 functions as the Phosphocysteine intermediate; for EIIB activity in the catalytic mechanism. The residue at position 425 (C425) is a Phosphocysteine; by EIIA.

As to quaternary structure, homodimer.

The protein resides in the cell membrane. It carries out the reaction D-mannitol(out) + N(pros)-phospho-L-histidyl-[protein] = D-mannitol 1-phosphate(in) + L-histidyl-[protein]. Functionally, the phosphoenolpyruvate-dependent sugar phosphotransferase system (sugar PTS), a major carbohydrate active transport system, catalyzes the phosphorylation of incoming sugar substrates concomitantly with their translocation across the cell membrane. The enzyme II CmtAB PTS system is involved in D-mannitol transport. The sequence is that of PTS system mannitol-specific EIICB component (mtlA) from Staphylococcus aureus (strain COL).